The chain runs to 441 residues: Deoxyguanosinetriphosphate triphosphohydrolase-like protein (441 aa).

The region spanning 62–255 (RLTHSLEAAQ…MELADDIAYG (194 aa)) is the HD domain.

The protein belongs to the dGTPase family. Type 2 subfamily.

This Vibrio cholerae serotype O1 (strain ATCC 39541 / Classical Ogawa 395 / O395) protein is Deoxyguanosinetriphosphate triphosphohydrolase-like protein (dgt).